The primary structure comprises 524 residues: Glycoprotein (524 aa).

The signal sequence occupies residues 1 to 19 (MVPQALLLVPILGFSSCFG). The Virion surface segment spans residues 20-459 (KFPIYTIPDT…DLGLPNWGEY (440 aa)). 6 disulfides stabilise this stretch: Cys-43/Cys-302, Cys-54/Cys-226, Cys-80/Cys-113, Cys-178/Cys-188, Cys-208/Cys-247, and Cys-242/Cys-271. N-linked (GlcNAc...) asparagine; by host glycosylation occurs at Asn-56. N-linked (GlcNAc...) asparagine; by host glycosylation is found at Asn-266 and Asn-338. Cys-363 and Cys-370 are disulfide-bonded. The helical transmembrane segment at 460 to 480 (VLLSAGTLIALMLIIFLMTCC) threads the bilayer. The S-palmitoyl cysteine; by host moiety is linked to residue Cys-480. Topologically, residues 481–524 (RKVDRPESTQRSLRGTGRNVSVTSQSGKFIPSWESYKSGGETGL) are intravirion.

It belongs to the lyssavirus glycoprotein family. As to quaternary structure, homotrimer. Interacts with matrix protein. Interacts with host TRFC. Interacts with host BST2; this interaction inhibits viral budding by tethering new virions to the cell surface. Interacts with ITGB1. Interacts with host GRM2. In terms of processing, glycosylated and palmitoylated by host. Glycosylation is crucial for glycoprotein export at the cell surface.

The protein localises to the virion membrane. Its function is as follows. Attaches the virus to host cellular receptor, inducing endocytosis of the virion by using different host proteins including TFRC, GRM2 and ITGB1. In the endosome, the acidic pH induces conformational changes in the glycoprotein trimer, which trigger fusion between virus and cell membrane. There is convincing in vitro evidence that the muscular form of the nicotinic acetylcholine receptor (nAChR), the neuronal cell adhesion molecule (NCAM), and the p75 neurotrophin receptor (p75NTR) bind glycoprotein and thereby facilitate rabies virus entry into cells. This Rabies virus (strain Nishigahara RCEH) (RABV) protein is Glycoprotein (G).